Consider the following 84-residue polypeptide: Large ribosomal subunit protein bL31B (84 aa).

It belongs to the bacterial ribosomal protein bL31 family. Type B subfamily. In terms of assembly, part of the 50S ribosomal subunit.

This Staphylococcus aureus (strain Mu3 / ATCC 700698) protein is Large ribosomal subunit protein bL31B.